The following is a 598-amino-acid chain: Elongation factor 4 (598 aa).

The 182-residue stretch at 4 to 185 (KNIRNFSIIA…TIITKIPAPK (182 aa)) folds into the tr-type G domain. GTP is bound by residues 16–21 (DHGKST) and 132–135 (NKID).

The protein belongs to the TRAFAC class translation factor GTPase superfamily. Classic translation factor GTPase family. LepA subfamily.

The protein localises to the cell inner membrane. The enzyme catalyses GTP + H2O = GDP + phosphate + H(+). In terms of biological role, required for accurate and efficient protein synthesis under certain stress conditions. May act as a fidelity factor of the translation reaction, by catalyzing a one-codon backward translocation of tRNAs on improperly translocated ribosomes. Back-translocation proceeds from a post-translocation (POST) complex to a pre-translocation (PRE) complex, thus giving elongation factor G a second chance to translocate the tRNAs correctly. Binds to ribosomes in a GTP-dependent manner. The sequence is that of Elongation factor 4 from Campylobacter jejuni subsp. jejuni serotype O:2 (strain ATCC 700819 / NCTC 11168).